We begin with the raw amino-acid sequence, 106 residues long: MRGSTAMLLAAIALFSSQSFATAIGKSRTLRSFEELEERQLASGSGSNNGLDDVKRSALVELLGEKVVAGGPTSILKAMMKLSDEELQNFIDKNIGSDSDSASGGN.

A signal peptide spans 1 to 17; it reads MRGSTAMLLAAIALFSS. The short motif at 28–39 is the RxLR-dEER element; the sequence is RTLRSFEELEER.

Belongs to the RxLR effector family.

It is found in the secreted. Its subcellular location is the host cell. Its function is as follows. Effector that may act as a suppressor of cell death to interrupt plant immunity. I. This chain is Secreted RxLR effector protein 18, found in Plasmopara viticola (Downy mildew of grapevine).